The primary structure comprises 352 residues: Gap junction alpha-4 protein (352 aa).

Residues 2–23 (GDWEFLEKLLDQVQEHSTSIGK) lie on the Cytoplasmic side of the membrane. Residues 24–46 (IWLMVLFIFRILILGLAGESVWG) form a helical membrane-spanning segment. The Extracellular portion of the chain corresponds to 47-76 (DEQSDFTCNTEQPGCTNVCYDKAFPISHVR). The chain crosses the membrane as a helical span at residues 77–99 (YWVLQFLFVSTPTLFYLGHVIYL). The Cytoplasmic portion of the chain corresponds to 100–153 (SRKEEKLKQKESELRALDDKEQVEQAIAIIEKKKLKLYIQEDGTVKIKGALMYT). A helical membrane pass occupies residues 154-176 (YLTSVIFKSIFEAGFLLGQWYLY). The Extracellular segment spans residues 177-208 (GFVMTPIYVCERVPCPHKVDCFVSRPMEKTIF). The helical transmembrane segment at 209–231 (IIFMLVVSLISLFLNVLELIHLI) threads the bilayer. The Cytoplasmic segment spans residues 232 to 352 (CKSMIHALKK…SSSASKKQYV (121 aa)). Residues 332-352 (HSTVEKASTRASSSASKKQYV) form a disordered region. Over residues 340–352 (TRASSSASKKQYV) the composition is skewed to low complexity.

It belongs to the connexin family. Alpha-type (group II) subfamily. In terms of assembly, a connexon is composed of a hexamer of connexins. Expressed in ovarian somatic cells, heart, leg muscle, liver and eye but not in brain.

The protein localises to the cell membrane. The protein resides in the cell junction. It is found in the gap junction. In terms of biological role, one gap junction consists of a cluster of closely packed pairs of transmembrane channels, the connexons, through which materials of low MW diffuse from one cell to a neighboring cell. This chain is Gap junction alpha-4 protein (gja4), found in Xenopus laevis (African clawed frog).